The following is an 831-amino-acid chain: LTLGARGRRTRSPSPTLGESLAPRKGSFSGRLSPAYSLGSLTGASPRQSPHAQRKLSSGDLRVPIPRERKNSITEISDNEDDLLEYHRRQRQERLREQEMERLERQRLETILNLCAEYSRADGGPETGELPSIGEATAALALAGRRPSRGLAGAIVVSGRSGEESGGASQRLWESMERSDEENLKEECSSTESTQQEHEDAPSTKLQGEVLAVEEERAQVLGRVEQLKVRVKELEQQLQEAAREAEMERALLQGEREAERALLQKEQRAMDQLQEKLVALETGIQKERDKEADALETETKLFEDLEFQQLERESRVEEERELAGQGLLRSKAELLRSVSKRKERLAVLDSQAGQIRAQAVQESERLAREKNAVLQLLQKEKEKLTVLERRYHSLTGGRPFPKTTSTLKEVYRSKMNGDMASPLPRTRSGPLPSSSGSSSSSSQLSVATLGRSPSPKSALLAQNGTSSLPRNLAATLQDIETKRQLALQQKVELPPAEPLSPEDPAGHQVIEEQRRRLAELKQKAAAEAQCQWDALHGAAAFPAGPSGFPTLMHHSILHHLPAGRERGEEGEHAYDTLSLESSDSMETSISTGGNSACSPDNMSSASGLDMGKIEEMEKMLKEAHAEKSRLMESREREMELRRQALEEERRRREQVERRLQSESARRQQLVEKEVKLREKQFSQARPLTRYLPNRKEDFDLKTHIESSGHGVDTCLHVVLSSKVCRGYLIKMGGKIKSWKKRWFVFDRLKRTLSYYVDKHETKLKGVIYFQAIEEVYYDHLRSAAKSPNPALTFCVKTHDRLYYMVAPSAEAMRIWMDVIVTGAEGYTQFMN.

The span at 1-11 (LTLGARGRRTR) shows a compositional bias: basic residues. The segment at 1 to 73 (LTLGARGRRT…PIPRERKNSI (73 aa)) is disordered. Omega-N-methylarginine is present on Arg6. A phosphoserine mark is found at Ser12 and Ser14. Thr16 carries the phosphothreonine modification. Residues Ser27, Ser33, Ser45, Ser49, Ser57, Ser72, Ser77, and Ser175 each carry the phosphoserine modification. The segment covering 39–51 (GSLTGASPRQSPH) has biased composition (polar residues). Disordered regions lie at residues 160–209 (RSGE…LQGE) and 416–465 (NGDM…QNGT). The span at 174–188 (ESMERSDEENLKEEC) shows a compositional bias: basic and acidic residues. Residues 180–306 (DEENLKEECS…TETKLFEDLE (127 aa)) adopt a coiled-coil conformation. Residues Ser421 and Ser467 each carry the phosphoserine modification. Positions 421-442 (SPLPRTRSGPLPSSSGSSSSSS) are enriched in low complexity. The segment at 584 to 603 (SMETSISTGGNSACSPDNMS) is disordered. Positions 610-676 (MGKIEEMEKM…QQLVEKEVKL (67 aa)) form a coiled coil. The PH domain occupies 721-824 (SKVCRGYLIK…WMDVIVTGAE (104 aa)).

This is Pleckstrin homology-like domain family B member 1 (Phldb1) from Rattus norvegicus (Rat).